The following is a 248-amino-acid chain: Pyridoxine 5'-phosphate synthase (248 aa).

Asparagine 11 is a binding site for 3-amino-2-oxopropyl phosphate. Residue 13-14 (DH) coordinates 1-deoxy-D-xylulose 5-phosphate. Residue arginine 22 participates in 3-amino-2-oxopropyl phosphate binding. Histidine 47 serves as the catalytic Proton acceptor. 1-deoxy-D-xylulose 5-phosphate is bound by residues arginine 49 and histidine 54. Glutamate 74 serves as the catalytic Proton acceptor. Threonine 104 is a 1-deoxy-D-xylulose 5-phosphate binding site. Histidine 198 (proton donor) is an active-site residue. 3-amino-2-oxopropyl phosphate contacts are provided by residues glycine 199 and 220 to 221 (GH).

It belongs to the PNP synthase family. As to quaternary structure, homooctamer; tetramer of dimers.

It localises to the cytoplasm. It carries out the reaction 3-amino-2-oxopropyl phosphate + 1-deoxy-D-xylulose 5-phosphate = pyridoxine 5'-phosphate + phosphate + 2 H2O + H(+). Its pathway is cofactor biosynthesis; pyridoxine 5'-phosphate biosynthesis; pyridoxine 5'-phosphate from D-erythrose 4-phosphate: step 5/5. Functionally, catalyzes the complicated ring closure reaction between the two acyclic compounds 1-deoxy-D-xylulose-5-phosphate (DXP) and 3-amino-2-oxopropyl phosphate (1-amino-acetone-3-phosphate or AAP) to form pyridoxine 5'-phosphate (PNP) and inorganic phosphate. This is Pyridoxine 5'-phosphate synthase from Ruegeria pomeroyi (strain ATCC 700808 / DSM 15171 / DSS-3) (Silicibacter pomeroyi).